Reading from the N-terminus, the 594-residue chain is Transcription factor TFIIIB component B'' (594 aa).

The disordered stretch occupies residues 1–169 (MSSIVNKSGT…ARRLSTISNK (169 aa)). Serine 49 is subject to Phosphoserine. Over residues 150-168 (LDSSSNSNGTARRLSTISN) the composition is skewed to polar residues. Serine 178 is subject to Phosphoserine. 2 disordered regions span residues 217 to 245 (SPPTAMTDSLDRNEFSSETSTSREADENE) and 317 to 343 (ARQEFKPLHSLTKEEQEEEEEKRKEER). 2 stretches are compositionally biased toward basic and acidic residues: residues 225-241 (SLDRNEFSSETSTSREA) and 317-330 (ARQEFKPLHSLTKE). The SANT domain occupies 415–466 (SYTDPWTVEEMIKFYKALSMWGTDFNLISQLYPYRSRKQVKAKFVNEEKKRP). Residues 520–529 (KNTAKEEDQT) show a composition bias toward basic and acidic residues. Disordered regions lie at residues 520–547 (KNTAKEEDQTAQRLNDANLNKKGSGGIM) and 567–594 (LKRKKLKERNNDDNEDNEGSEEEPEIDQ). Residues 579 to 594 (DNEDNEGSEEEPEIDQ) are compositionally biased toward acidic residues.

The protein belongs to the TFC5 family. TFIIIB comprises the TATA-binding protein (TBP), the B-related factor (BRF) and the B'' component (BDP1). Interacts with TFC4.

Its subcellular location is the nucleus. In terms of biological role, general activator of RNA polymerase III transcription. The chain is Transcription factor TFIIIB component B'' (BDP1) from Saccharomyces cerevisiae (strain ATCC 204508 / S288c) (Baker's yeast).